The primary structure comprises 390 residues: MLKPKDLCPRAGTRTFLEAMQAGKVHLARFVLDALDRSIIDCRAEQGRTPLMVAVGLPDPAMRSRFVRLLLEQGAAVNLRDERGRTALSLACERGHLDAVQLLVQFSGDPEATDSAGNSPVMWAAACGHGAVLEFLVRSFRRLGLRLDRTNRAGLTALQLAASRGHGTCVQALTGPWGRAAAAAAARGSNSDSPPGHPAPAPSPERRRPSPRRLPRPLLARFARAAGGHGHGHGHGHGHGGELASAGKGSVRYRAQGNERPELGRSMSLALGTMTEEETARLRAGALMARPNSPQSSGSGRWRSQEVLEGAPLALMQAPVGLSPHPEGCPGSGRLGLRRRSTAPDIPSLVGEASGPESGPELENNALPFSVPGPKPWQAGTEAVVLQAQR.

ANK repeat units follow at residues 11–40 (AGTR…RSII), 46–79 (QGRT…AVNL), 83–112 (RGRT…DPEA), 116–145 (AGNS…RLGL), and 153–182 (AGLT…RAAA). Disordered regions lie at residues 181–213 (AAAA…SPRR) and 226–245 (AGGH…ELAS). A Phosphoserine modification is found at Ser-193. Ser-304 bears the Phosphoserine mark. The disordered stretch occupies residues 320-377 (VGLSPHPEGCPGSGRLGLRRRSTAPDIPSLVGEASGPESGPELENNALPFSVPGPKPW).

This is Ankyrin repeat domain-containing protein 63 from Mus musculus (Mouse).